The primary structure comprises 109 residues: Movement protein TGB2 (109 aa).

Over 1 to 9 the chain is Cytoplasmic; sequence MPLQPPPDH. Residues 10 to 30 traverse the membrane as a helical segment; that stretch reads TWAVRIIALGLAVTALIFTST. The Lumenal segment spans residues 31-71; sequence RDTSRHVGDPSHSLPFGGHYRDGSKVIHYNSPRSSKPSNHT. A helical transmembrane segment spans residues 72–92; the sequence is PYLLFAPIGIILLIHALHRLG. Residues 93-109 lie on the Cytoplasmic side of the membrane; it reads NSAHICRCTHCMPHSQT.

Belongs to the Tymovirales TGBp2 protein family.

The protein resides in the host endoplasmic reticulum membrane. Functionally, plays a role in viral cell-to-cell propagation, by facilitating genome transport to neighboring plant cells through plasmosdesmata,. The chain is Movement protein TGB2 from Citrus (ICRSV).